We begin with the raw amino-acid sequence, 120 residues long: Ribosome-binding factor A (120 aa).

It belongs to the RbfA family. Monomer. Binds 30S ribosomal subunits, but not 50S ribosomal subunits or 70S ribosomes.

It is found in the cytoplasm. Its function is as follows. One of several proteins that assist in the late maturation steps of the functional core of the 30S ribosomal subunit. Associates with free 30S ribosomal subunits (but not with 30S subunits that are part of 70S ribosomes or polysomes). Required for efficient processing of 16S rRNA. May interact with the 5'-terminal helix region of 16S rRNA. The chain is Ribosome-binding factor A from Clostridium botulinum (strain Okra / Type B1).